Reading from the N-terminus, the 128-residue chain is Arginine decarboxylase proenzyme (128 aa).

Serine 76 acts as the Schiff-base intermediate with substrate; via pyruvic acid in catalysis. A Pyruvic acid (Ser); by autocatalysis modification is found at serine 76. Histidine 81 (proton acceptor; for processing activity) is an active-site residue. The Proton donor; for catalytic activity role is filled by cysteine 96.

Belongs to the prokaryotic AdoMetDC family. Type 1 subfamily. Heterooctamer of four alpha and four beta chains arranged as a tetramer of alpha/beta heterodimers. Pyruvate serves as cofactor. Post-translationally, is synthesized initially as an inactive proenzyme. Formation of the active enzyme involves a self-maturation process in which the active site pyruvoyl group is generated from an internal serine residue via an autocatalytic post-translational modification. Two non-identical subunits are generated from the proenzyme in this reaction, and the pyruvate is formed at the N-terminus of the alpha chain, which is derived from the carboxyl end of the proenzyme. The post-translation cleavage follows an unusual pathway, termed non-hydrolytic serinolysis, in which the side chain hydroxyl group of the serine supplies its oxygen atom to form the C-terminus of the beta chain, while the remainder of the serine residue undergoes an oxidative deamination to produce ammonia and the pyruvoyl group blocking the N-terminus of the alpha chain.

The catalysed reaction is L-arginine + H(+) = agmatine + CO2. It participates in amine and polyamine biosynthesis; agmatine biosynthesis; agmatine from L-arginine: step 1/1. In terms of biological role, specifically catalyzes the decarboxylation of L-arginine to agmatine. Has no S-adenosylmethionine decarboxylase (AdoMetDC) activity. This Metallosphaera sedula (strain ATCC 51363 / DSM 5348 / JCM 9185 / NBRC 15509 / TH2) protein is Arginine decarboxylase proenzyme.